Reading from the N-terminus, the 703-residue chain is Fanconi anemia group B protein homolog (703 aa).

Belongs to the multisubunit FA complex composed of FANCA, FANCB, FANCC, FANCE, FANCF, FANCG, FANCL/PHF9 and FANCM.

The protein resides in the nucleus. Its function is as follows. DNA repair protein required for FANCD2 ubiquitination. This is Fanconi anemia group B protein homolog (Fancb) from Mus musculus (Mouse).